Consider the following 155-residue polypeptide: DNA gyrase inhibitor (155 aa).

The protein belongs to the DNA gyrase inhibitor family. In terms of assembly, interacts with DNA gyrase.

Its subcellular location is the cytoplasm. Its function is as follows. Inhibits the supercoiling activity of DNA gyrase. Acts by inhibiting DNA gyrase at an early step, prior to (or at the step of) binding of DNA by the gyrase. It protects cells against toxins that target DNA gyrase, by inhibiting activity of these toxins and reducing the formation of lethal double-strand breaks in the cell. In Escherichia fergusonii (strain ATCC 35469 / DSM 13698 / CCUG 18766 / IAM 14443 / JCM 21226 / LMG 7866 / NBRC 102419 / NCTC 12128 / CDC 0568-73), this protein is DNA gyrase inhibitor.